The primary structure comprises 104 residues: L-rhamnose mutarotase (104 aa).

Substrate is bound at residue Tyr-18. His-22 acts as the Proton donor in catalysis. Residues Tyr-41 and 76–77 (WW) contribute to the substrate site.

The protein belongs to the rhamnose mutarotase family. As to quaternary structure, homodimer.

Its subcellular location is the cytoplasm. It carries out the reaction alpha-L-rhamnose = beta-L-rhamnose. It functions in the pathway carbohydrate metabolism; L-rhamnose metabolism. Functionally, involved in the anomeric conversion of L-rhamnose. This Burkholderia ambifaria (strain MC40-6) protein is L-rhamnose mutarotase.